Here is a 378-residue protein sequence, read N- to C-terminus: tRNA-specific 2-thiouridylase MnmA (378 aa).

Residues 9-16 (GVSGGVDS) and Met-35 contribute to the ATP site. The interaction with target base in tRNA stretch occupies residues 94-96 (NPD). The active-site Nucleophile is Cys-99. A disulfide bridge links Cys-99 with Cys-195. An ATP-binding site is contributed by Gly-123. An interaction with tRNA region spans residues 145-147 (KDQ). The Cysteine persulfide intermediate role is filled by Cys-195. Positions 307-308 (RY) are interaction with tRNA.

It belongs to the MnmA/TRMU family.

It localises to the cytoplasm. It carries out the reaction S-sulfanyl-L-cysteinyl-[protein] + uridine(34) in tRNA + AH2 + ATP = 2-thiouridine(34) in tRNA + L-cysteinyl-[protein] + A + AMP + diphosphate + H(+). Functionally, catalyzes the 2-thiolation of uridine at the wobble position (U34) of tRNA, leading to the formation of s(2)U34. The chain is tRNA-specific 2-thiouridylase MnmA from Xanthomonas axonopodis pv. citri (strain 306).